The chain runs to 365 residues: Mitogen-activated protein kinase 13 (365 aa).

A Protein kinase domain is found at 25–308 (YVSPTHVGSG…AAQALTHPFF (284 aa)). 31-39 (VGSGAYGSV) is a binding site for ATP. Residue S47 is modified to Phosphoserine. An ATP-binding site is contributed by K54. The Proton acceptor role is filled by D150. The residue at position 180 (T180) is a Phosphothreonine; by MAP2K3, MAP2K4, MAP2K6 and MAP2K7. Residues 180–182 (TGY) carry the TXY motif. At Y182 the chain carries Phosphotyrosine; by MAP2K3, MAP2K4, MAP2K6 and MAP2K7. At S350 the chain carries Phosphoserine.

Belongs to the protein kinase superfamily. CMGC Ser/Thr protein kinase family. MAP kinase subfamily. Interacts with MAPK8IP2. Requires Mg(2+) as cofactor. Dually phosphorylated on Thr-180 and Tyr-182 by MAP2K3/MKK3, MAP2K4/MKK4, MAP2K6/MKK6 and MAP2K7/MKK7, which activates the enzyme. Dephosphorylated by dual specificity phosphatase DUSP1. In terms of tissue distribution, expressed in testes, pancreas, small intestine, lung and kidney. Abundant in macrophages, also present in neutrophils, CD4+ T-cells, and endothelial cells.

The catalysed reaction is L-seryl-[protein] + ATP = O-phospho-L-seryl-[protein] + ADP + H(+). It catalyses the reaction L-threonyl-[protein] + ATP = O-phospho-L-threonyl-[protein] + ADP + H(+). Its activity is regulated as follows. Activated by phosphorylation on threonine and tyrosine by dual specificity kinases, MAP2K3/MKK3, MAP2K6/MKK6, MAP2K4/MKK4 and MAP2K7/MKK7. Activation by ultraviolet radiation, hyperosmotic shock, anisomycin or by TNF-alpha is mediated by MAP2K3/MKK3. Inhibited by dual specificity phosphatase DUSP1. Functionally, serine/threonine kinase which acts as an essential component of the MAP kinase signal transduction pathway. MAPK13 is one of the four p38 MAPKs which play an important role in the cascades of cellular responses evoked by extracellular stimuli such as pro-inflammatory cytokines or physical stress leading to direct activation of transcription factors such as ELK1 and ATF2. Accordingly, p38 MAPKs phosphorylate a broad range of proteins and it has been estimated that they may have approximately 200 to 300 substrates each. MAPK13 is one of the less studied p38 MAPK isoforms. Some of the targets are downstream kinases such as MAPKAPK2, which are activated through phosphorylation and further phosphorylate additional targets. Plays a role in the regulation of protein translation by phosphorylating and inactivating EEF2K. Involved in cytoskeletal remodeling through phosphorylation of MAPT and STMN1. Mediates UV irradiation induced up-regulation of the gene expression of CXCL14. Plays an important role in the regulation of epidermal keratinocyte differentiation, apoptosis and skin tumor development. Phosphorylates the transcriptional activator MYB in response to stress which leads to rapid MYB degradation via a proteasome-dependent pathway. MAPK13 also phosphorylates and down-regulates PRKD1 during regulation of insulin secretion in pancreatic beta cells. The sequence is that of Mitogen-activated protein kinase 13 (MAPK13) from Homo sapiens (Human).